Reading from the N-terminus, the 975-residue chain is Translation initiation factor IF-2 (975 aa).

The segment covering 48–63 has biased composition (basic and acidic residues); it reads DHLRKSHGATDGDKRK. Disordered stretches follow at residues 48 to 84 and 98 to 388; these read DHLR…GKAR and KRDD…QAPT. The segment covering 104–115 has biased composition (low complexity); it reads ETGADQAQAQTD. The span at 120 to 177 shows a compositional bias: basic and acidic residues; sequence AELKRREEEARREAELLEKQAQELRERQERLEREEAERRAREEAAEAERRRAEEEAAA. The span at 178 to 211 shows a compositional bias: low complexity; it reads KRAAAAQAEAAQQAAAAREQAQRAQSEPAEQSAQ. The span at 212–263 shows a compositional bias: basic and acidic residues; sequence DEARAAAERAAQREAAKKAEDAAREAADKARAEQEEIRKRREAAEAEARAIR. A compositionally biased stretch (low complexity) spans 302-330; sequence KPAGEAAAARPAAKKPASGAPAPAAAPAG. Positions 359–372 are enriched in gly residues; the sequence is SSGGVDRGWRGGPK. In terms of domain architecture, tr-type G spans 475–644; that stretch reads PRPPVVTVMG…LLQAEVLELK (170 aa). The interval 484 to 491 is G1; the sequence is GHVDHGKT. 484–491 lines the GTP pocket; the sequence is GHVDHGKT. Residues 509-513 form a G2 region; the sequence is GITQH. The tract at residues 530-533 is G3; the sequence is DTPG. GTP is bound by residues 530 to 534 and 584 to 587; these read DTPGH and NKID. Residues 584–587 form a G4 region; it reads NKID. The tract at residues 620 to 622 is G5; it reads SAK.

The protein belongs to the TRAFAC class translation factor GTPase superfamily. Classic translation factor GTPase family. IF-2 subfamily.

The protein resides in the cytoplasm. One of the essential components for the initiation of protein synthesis. Protects formylmethionyl-tRNA from spontaneous hydrolysis and promotes its binding to the 30S ribosomal subunits. Also involved in the hydrolysis of GTP during the formation of the 70S ribosomal complex. The polypeptide is Translation initiation factor IF-2 (Burkholderia mallei (strain NCTC 10247)).